The chain runs to 385 residues: Succinyl-diaminopimelate desuccinylase (385 aa).

H73 lines the Zn(2+) pocket. D75 is a catalytic residue. D106 serves as a coordination point for Zn(2+). Residue E141 is the Proton acceptor of the active site. E142, E170, and H359 together coordinate Zn(2+).

This sequence belongs to the peptidase M20A family. DapE subfamily. As to quaternary structure, homodimer. The cofactor is Zn(2+). Co(2+) serves as cofactor.

It catalyses the reaction N-succinyl-(2S,6S)-2,6-diaminopimelate + H2O = (2S,6S)-2,6-diaminopimelate + succinate. The protein operates within amino-acid biosynthesis; L-lysine biosynthesis via DAP pathway; LL-2,6-diaminopimelate from (S)-tetrahydrodipicolinate (succinylase route): step 3/3. Catalyzes the hydrolysis of N-succinyl-L,L-diaminopimelic acid (SDAP), forming succinate and LL-2,6-diaminopimelate (DAP), an intermediate involved in the bacterial biosynthesis of lysine and meso-diaminopimelic acid, an essential component of bacterial cell walls. The protein is Succinyl-diaminopimelate desuccinylase of Methylorubrum extorquens (strain CM4 / NCIMB 13688) (Methylobacterium extorquens).